Consider the following 206-residue polypeptide: Holliday junction branch migration complex subunit RuvA (206 aa).

A domain I region spans residues 1–64 (MIGKLKGVLD…EDMIRLYGFR (64 aa)). Residues 65-144 (TVLEREWFRL…AFAGEAAGAI (80 aa)) form a domain II region. Residues 145 to 154 (GLKQDLGEGV) form a flexible linker region. The domain III stretch occupies residues 154 to 206 (VAPAPVSDAVSALANLGYSRDIAANAVAAALKSAGEGADTGTLIRLGLKELAR).

Belongs to the RuvA family. As to quaternary structure, homotetramer. Forms an RuvA(8)-RuvB(12)-Holliday junction (HJ) complex. HJ DNA is sandwiched between 2 RuvA tetramers; dsDNA enters through RuvA and exits via RuvB. An RuvB hexamer assembles on each DNA strand where it exits the tetramer. Each RuvB hexamer is contacted by two RuvA subunits (via domain III) on 2 adjacent RuvB subunits; this complex drives branch migration. In the full resolvosome a probable DNA-RuvA(4)-RuvB(12)-RuvC(2) complex forms which resolves the HJ.

Its subcellular location is the cytoplasm. Functionally, the RuvA-RuvB-RuvC complex processes Holliday junction (HJ) DNA during genetic recombination and DNA repair, while the RuvA-RuvB complex plays an important role in the rescue of blocked DNA replication forks via replication fork reversal (RFR). RuvA specifically binds to HJ cruciform DNA, conferring on it an open structure. The RuvB hexamer acts as an ATP-dependent pump, pulling dsDNA into and through the RuvAB complex. HJ branch migration allows RuvC to scan DNA until it finds its consensus sequence, where it cleaves and resolves the cruciform DNA. This Chelativorans sp. (strain BNC1) protein is Holliday junction branch migration complex subunit RuvA.